The chain runs to 111 residues: COX assembly mitochondrial protein (111 aa).

Positions 39-82 (YKKCANFVQAMADCAKANGMKVFPTCDKQRDEMKSCLLFYQTDE) constitute a CHCH domain. 2 short sequence motifs (cx9C motif) span residues 42–52 (CANFVQAMADC) and 64–74 (CDKQRDEMKSC). Cystine bridges form between Cys42/Cys74 and Cys52/Cys64.

It belongs to the CMC family.

Its subcellular location is the mitochondrion inner membrane. Required for mitochondrial cytochrome c oxidase (COX) assembly and respiration. Binds copper. May be involved in copper trafficking and distribution to mitochondrial COX and SOD1. The chain is COX assembly mitochondrial protein (CMC1) from Saccharomyces cerevisiae (strain YJM789) (Baker's yeast).